A 422-amino-acid polypeptide reads, in one-letter code: Serine hydroxymethyltransferase (422 aa).

(6S)-5,6,7,8-tetrahydrofolate contacts are provided by residues Leu113 and Gly117–Leu119. Position 222 is an N6-(pyridoxal phosphate)lysine (Lys222).

This sequence belongs to the SHMT family. Homodimer. The cofactor is pyridoxal 5'-phosphate.

The protein resides in the cytoplasm. The enzyme catalyses (6R)-5,10-methylene-5,6,7,8-tetrahydrofolate + glycine + H2O = (6S)-5,6,7,8-tetrahydrofolate + L-serine. It participates in one-carbon metabolism; tetrahydrofolate interconversion. The protein operates within amino-acid biosynthesis; glycine biosynthesis; glycine from L-serine: step 1/1. Functionally, catalyzes the reversible interconversion of serine and glycine with tetrahydrofolate (THF) serving as the one-carbon carrier. This reaction serves as the major source of one-carbon groups required for the biosynthesis of purines, thymidylate, methionine, and other important biomolecules. Also exhibits THF-independent aldolase activity toward beta-hydroxyamino acids, producing glycine and aldehydes, via a retro-aldol mechanism. The protein is Serine hydroxymethyltransferase of Amoebophilus asiaticus (strain 5a2).